A 206-amino-acid polypeptide reads, in one-letter code: Translation machinery-associated protein 22 (206 aa).

An SUI1 domain is found at 98–169 (VVIKREARTK…EVEKYIHSLL (72 aa)). The disordered stretch occupies residues 184–206 (SQKKKKKPTDEANSNNNNNNNNK). A compositionally biased stretch (low complexity) spans 196–206 (NSNNNNNNNNK).

Belongs to the DENR family. As to quaternary structure, interacts with the 40S ribosomal subunit.

It localises to the cytoplasm. This chain is Translation machinery-associated protein 22 (TMA22), found in Vanderwaltozyma polyspora (strain ATCC 22028 / DSM 70294 / BCRC 21397 / CBS 2163 / NBRC 10782 / NRRL Y-8283 / UCD 57-17) (Kluyveromyces polysporus).